A 312-amino-acid polypeptide reads, in one-letter code: Olfactory receptor 51B5 (312 aa).

Residues 1–23 (MSSSGSSHPFLLTGFPGLEEAHH) are Extracellular-facing. Residues 24–44 (WISVFFLFMYISILFGNGTLL) traverse the membrane as a helical segment. Residues 45–52 (LLIKEDHN) are Cytoplasmic-facing. Residues 53-73 (LHEPMYFFLAMLAATDLGLAL) traverse the membrane as a helical segment. The Extracellular segment spans residues 74 to 97 (TTMPTVLGVLWLDHREIGSAACFS). A disulfide bridge connects residues Cys95 and Cys187. A helical transmembrane segment spans residues 98-118 (QAYFIHSLSFLESGILLAMAY). Residues 119-137 (DRFIAICNPLRYTSVLTNT) lie on the Cytoplasmic side of the membrane. The helical transmembrane segment at 138-158 (RVVKIGLGVLMRGFVSVVPPI) threads the bilayer. Over 159-194 (RPLYFFLYCHSHVLSHAFCLHQDVIKLACADTTFNR) the chain is Extracellular. Residues 195 to 215 (LYPAVLVVFIFVLDYLIIFIS) traverse the membrane as a helical segment. Residues 216 to 235 (YVLILKTVLSIASREERAKA) are Cytoplasmic-facing. A helical transmembrane segment spans residues 236-256 (LITCVSHICCVLVFYVTVIGL). The Extracellular segment spans residues 257 to 271 (SLIHRFGKQVPHIVH). Residues 272 to 292 (LIMSYAYFLFPPLMNPITYSV) form a helical membrane-spanning segment. Topologically, residues 293–312 (KTKQIQNAILHLFTTHRIGT) are cytoplasmic.

It belongs to the G-protein coupled receptor 1 family.

It localises to the cell membrane. Functionally, odorant receptor. This Homo sapiens (Human) protein is Olfactory receptor 51B5 (OR51B5).